The primary structure comprises 445 residues: tRNA(Ile)-lysidine synthase (445 aa).

Position 30–35 (30–35 (SGGLDS)) interacts with ATP.

It belongs to the tRNA(Ile)-lysidine synthase family.

It localises to the cytoplasm. The catalysed reaction is cytidine(34) in tRNA(Ile2) + L-lysine + ATP = lysidine(34) in tRNA(Ile2) + AMP + diphosphate + H(+). In terms of biological role, ligates lysine onto the cytidine present at position 34 of the AUA codon-specific tRNA(Ile) that contains the anticodon CAU, in an ATP-dependent manner. Cytidine is converted to lysidine, thus changing the amino acid specificity of the tRNA from methionine to isoleucine. In Alkalilimnicola ehrlichii (strain ATCC BAA-1101 / DSM 17681 / MLHE-1), this protein is tRNA(Ile)-lysidine synthase.